A 468-amino-acid chain; its full sequence is ATP synthase subunit beta (468 aa).

155–162 (GGAGVGKT) is a binding site for ATP.

This sequence belongs to the ATPase alpha/beta chains family. F-type ATPases have 2 components, CF(1) - the catalytic core - and CF(0) - the membrane proton channel. CF(1) has five subunits: alpha(3), beta(3), gamma(1), delta(1), epsilon(1). CF(0) has three main subunits: a(1), b(2) and c(9-12). The alpha and beta chains form an alternating ring which encloses part of the gamma chain. CF(1) is attached to CF(0) by a central stalk formed by the gamma and epsilon chains, while a peripheral stalk is formed by the delta and b chains.

The protein localises to the cell inner membrane. The catalysed reaction is ATP + H2O + 4 H(+)(in) = ADP + phosphate + 5 H(+)(out). In terms of biological role, produces ATP from ADP in the presence of a proton gradient across the membrane. The catalytic sites are hosted primarily by the beta subunits. The chain is ATP synthase subunit beta from Bdellovibrio bacteriovorus (strain ATCC 15356 / DSM 50701 / NCIMB 9529 / HD100).